The primary structure comprises 189 residues: UPF0301 protein A1E_00140 (189 aa).

This sequence belongs to the UPF0301 (AlgH) family.

In Rickettsia canadensis (strain McKiel), this protein is UPF0301 protein A1E_00140.